The sequence spans 41 residues: Photosystem I reaction center subunit IX (41 aa).

Residues 7–29 (YLSTAPVLLTVWLSITASGIMII) form a helical membrane-spanning segment.

The protein belongs to the PsaJ family.

It is found in the plastid. Its subcellular location is the chloroplast thylakoid membrane. May help in the organization of the PsaE and PsaF subunits. This is Photosystem I reaction center subunit IX from Heterosigma akashiwo (strain NIES-293 / 8280G21-1).